A 943-amino-acid chain; its full sequence is TBC1 domain family member 2B (943 aa).

A disordered region spans residues 1 to 29 (MPGVEDPCDSQGTPPEEPSTSVAPGEAAK). A compositionally biased stretch (polar residues) spans 10-22 (SQGTPPEEPSTSV). The PH domain maps to 32 to 129 (SPRLCGYLAK…WLQELQQKRW (98 aa)). Positions 315 to 514 (RMESDVLLKL…ARYSNLEAKM (200 aa)) form a coiled coil. A Rab-GAP TBC domain is found at 642–836 (GIPHEHRSRM…RIWDSLLYEG (195 aa)).

It localises to the early endosome. Its function is as follows. GTPase-activating protein that plays a role in the early steps of endocytosis. The chain is TBC1 domain family member 2B (tbc1d2b) from Xenopus tropicalis (Western clawed frog).